The sequence spans 355 residues: UDP-N-acetylglucosamine--N-acetylmuramyl-(pentapeptide) pyrophosphoryl-undecaprenol N-acetylglucosamine transferase (355 aa).

Residues 15–17, asparagine 127, arginine 163, serine 191, isoleucine 244, 263–268, and glutamine 288 contribute to the UDP-N-acetyl-alpha-D-glucosamine site; these read TGG and ALTVSE.

The protein belongs to the glycosyltransferase 28 family. MurG subfamily.

It localises to the cell inner membrane. It carries out the reaction di-trans,octa-cis-undecaprenyl diphospho-N-acetyl-alpha-D-muramoyl-L-alanyl-D-glutamyl-meso-2,6-diaminopimeloyl-D-alanyl-D-alanine + UDP-N-acetyl-alpha-D-glucosamine = di-trans,octa-cis-undecaprenyl diphospho-[N-acetyl-alpha-D-glucosaminyl-(1-&gt;4)]-N-acetyl-alpha-D-muramoyl-L-alanyl-D-glutamyl-meso-2,6-diaminopimeloyl-D-alanyl-D-alanine + UDP + H(+). The protein operates within cell wall biogenesis; peptidoglycan biosynthesis. Cell wall formation. Catalyzes the transfer of a GlcNAc subunit on undecaprenyl-pyrophosphoryl-MurNAc-pentapeptide (lipid intermediate I) to form undecaprenyl-pyrophosphoryl-MurNAc-(pentapeptide)GlcNAc (lipid intermediate II). The protein is UDP-N-acetylglucosamine--N-acetylmuramyl-(pentapeptide) pyrophosphoryl-undecaprenol N-acetylglucosamine transferase of Salmonella choleraesuis (strain SC-B67).